The primary structure comprises 676 residues: Envelope glycoprotein (676 aa).

The first 34 residues, 1–34, serve as a signal peptide directing secretion; that stretch reads MACSTLSKSPKDKIDPRDLLIPLILFLSLKGARS. Positions 35–270 are receptor-binding domain (RBD); the sequence is AAPGSSPHQV…SYQNLGPRIP (236 aa). Over 35–620 the chain is Extracellular; sequence AAPGSSPHQV…FNRSPWFTTL (586 aa). A glycan (N-linked (GlcNAc...) asparagine; by host) is linked at Asn46. Cystine bridges form between Cys80–Cys132, Cys106–Cys121, Cys107–Cys117, Cys155–Cys175, and Cys167–Cys180. His89 lines the Zn(2+) pocket. A Zn(2+)-binding site is contributed by Asp120. The N-linked (GlcNAc...) asparagine; by host glycan is linked to Asn202. A disulfide bridge connects residues Cys212 and Cys218. Residues 287–321 form a disordered region; sequence NPLPKPAKSPPASSSTPTLISPSPTPTQPPPAGTG. Over residues 296–308 the composition is skewed to low complexity; that stretch reads PPASSSTPTLISP. The segment covering 309 to 318 has biased composition (pro residues); the sequence is SPTPTQPPPA. Asn336 carries an N-linked (GlcNAc...) asparagine; by host glycan. 6 cysteine pairs are disulfide-bonded: Cys346/Cys349, Cys346/Cys573, Cys376/Cys430, Cys395/Cys407, Cys437/Cys450, and Cys565/Cys572. The CXXC signature appears at 346 to 349; sequence CWLC. 2 N-linked (GlcNAc...) asparagine; by host glycosylation sites follow: Asn368 and Asn375. N-linked (GlcNAc...) asparagine; by host glycosylation is found at Asn408 and Asn444. The fusion peptide stretch occupies residues 482 to 502; it reads VSLTLALLLGGLTMGGIAAGV. Positions 513-547 form a coiled coil; the sequence is QQFQQLHAAVQDDLKEVEKSITNLEKSLTSLSEVV. Residues 548–564 form an immunosuppression region; that stretch reads LQNRRGLDLLFLKEGGL. The CX6CC signature appears at 565 to 573; the sequence is CAALKEECC. A helical transmembrane segment spans residues 621–641; that stretch reads ISTIMGPLIILLLILLFGPCI. Residue Cys640 is the site of S-palmitoyl cysteine; by host attachment. Topologically, residues 642-676 are cytoplasmic; the sequence is LNRLVQFVKDRISVVQALVLTQQYHQLKPLEYEPQ. The YXXL motif; contains endocytosis signal signature appears at 665–668; the sequence is YHQL.

In terms of assembly, the mature envelope protein (Env) consists of a trimer of SU-TM heterodimers attached by a labile interchain disulfide bond. Specific enzymatic cleavages in vivo yield mature proteins. Envelope glycoproteins are synthesized as an inactive precursor that is N-glycosylated and processed likely by host cell furin or by a furin-like protease in the Golgi to yield the mature SU and TM proteins. The cleavage site between SU and TM requires the minimal sequence [KR]-X-[KR]-R. The R-peptide is released from the C-terminus of the cytoplasmic tail of the TM protein upon particle formation as a result of proteolytic cleavage by the viral protease. Cleavage of this peptide is required for TM to become fusogenic. Post-translationally, the CXXC motif is highly conserved across a broad range of retroviral envelope proteins. It is thought to participate in the formation of a labile disulfide bond possibly with the CX6CC motif present in the transmembrane protein. Isomerization of the intersubunit disulfide bond to an SU intrachain disulfide bond is thought to occur upon receptor recognition in order to allow membrane fusion. In terms of processing, the transmembrane protein is palmitoylated. The R-peptide is palmitoylated.

The protein resides in the virion membrane. It localises to the host cell membrane. Functionally, the surface protein (SU) attaches the virus to the host cell by binding to its receptor. This interaction triggers the refolding of the transmembrane protein (TM) and is thought to activate its fusogenic potential by unmasking its fusion peptide. Fusion occurs at the host cell plasma membrane. The transmembrane protein (TM) acts as a class I viral fusion protein. Under the current model, the protein has at least 3 conformational states: pre-fusion native state, pre-hairpin intermediate state, and post-fusion hairpin state. During viral and target cell membrane fusion, the coiled coil regions (heptad repeats) assume a trimer-of-hairpins structure, positioning the fusion peptide in close proximity to the C-terminal region of the ectodomain. The formation of this structure appears to drive apposition and subsequent fusion of viral and target cell membranes. Membranes fusion leads to delivery of the nucleocapsid into the cytoplasm. The sequence is that of Envelope glycoprotein (env) from Friend murine leukemia virus (isolate FB29) (FrMLV).